We begin with the raw amino-acid sequence, 759 residues long: Arylphorin subunit A4 (759 aa).

An N-terminal signal peptide occupies residues 1-16 (MKIAIVLLAIIALVAA).

It belongs to the hemocyanin family. As to quaternary structure, heterohexamer. In terms of tissue distribution, fat body.

It localises to the secreted. Its subcellular location is the extracellular space. Arylphorin is a larval storage protein (LSP) which may serve as a storage protein used primarily as a source of aromatic amino acids for protein synthesis during metamorphosis. It is a constituent of the sclerotizing system of the cuticle, and serves as a carrier for ecdysteroid hormone. The protein is Arylphorin subunit A4 of Calliphora vicina (Blue blowfly).